Reading from the N-terminus, the 976-residue chain is Terminal uridylyltransferase 1 (976 aa).

2 disordered regions span residues Met-1–Phe-47 and Thr-129–Gly-185. Residues Met-1–Gly-188 are required for oligomerization and may contribute to the incorporation into the MPsome complex. The span at Ala-147–Thr-183 shows a compositional bias: acidic residues. Residues Val-190–Leu-221 form a C2H2-type; atypical zinc finger. Residues Cys-195, Cys-198, His-212, and His-217 each coordinate Zn(2+). UTP-binding positions include Ser-298 and Ala-309–Asp-312. 2 residues coordinate Mg(2+): Asp-310 and Asp-312. Arg-358 is an RNA binding site. Residues Ala-366 to Asp-425 enclose the PAP-associated domain. Residues Gly-480 to Ser-484, Lys-505, Lys-509, and Ser-523 to Tyr-524 each bind UTP. The Nucleotide recognition motif (NRM) signature appears at Ile-652–Asn-661. An important for catalytic activity and RNA binding region spans residues Asp-700–Arg-976. Residues Ser-732–Ser-755 are disordered.

Belongs to the DNA polymerase type-B-like family. Oligomer. Component of the mitochondrial 3' processome (MPsome) complex composed at least of terminal uridylyltransferase KRET1/TUT1, 3'-5' exonuclease DSS1, MPSS1, MPSS2 and MPSS3. Within the complex, interacts with DSS1, MPSS1 and MPSS3. Requires Mg(2+) as cofactor. Mn(2+) serves as cofactor.

The protein resides in the mitochondrion. The catalysed reaction is RNA(n) + UTP = RNA(n)-3'-uridine ribonucleotide + diphosphate. Terminal uridylyltransferase which is involved in the post-transcriptional editing of mitochondrial RNA, a process involving the addition and deletion of uridine (U) nucleotides in the pre-RNA. Specifically, catalyzes the addition of Us to the 3'-hydroxyl group of guided RNA (gRNA), ribosomal RNA (rRNA) and some mRNAs. As part of the mitochondrial 3' processome (MPsome), catalyzes the primary 3' uridylation of gRNA precursors to facilitate their recognition and to induce their processive 3'-5' degradation by DSS1, and the secondary 3' uridylation of mature gRNAs. Involved in the 3' uridylylation of the long A/U tail of some edited and never-edited mRNAs. Promotes 3' uridylylation-mediated decay of some never-edited mRNAs. Does not mediate RNA-independent UTP polymerization. The polypeptide is Terminal uridylyltransferase 1 (Trypanosoma brucei brucei).